We begin with the raw amino-acid sequence, 257 residues long: Zinc transporter ZupT (257 aa).

Transmembrane regions (helical) follow at residues Leu5–Gly25, Leu32–Met52, and Gly61–Leu81. Residues Asn120 and Glu123 each contribute to the Fe(2+) site. Positions 123 and 148 each coordinate Zn(2+). 4 helical membrane-spanning segments follow: residues Leu137–Ala157, Ile171–Ile191, Met195–Leu215, and Gly236–Ile256. Fe(2+) contacts are provided by Asn149, Glu152, and Glu181. Glu152 provides a ligand contact to Zn(2+).

It belongs to the ZIP transporter (TC 2.A.5) family. ZupT subfamily.

It localises to the cell inner membrane. The enzyme catalyses Zn(2+)(in) = Zn(2+)(out). In terms of biological role, mediates zinc uptake. May also transport other divalent cations. The polypeptide is Zinc transporter ZupT (Escherichia coli O127:H6 (strain E2348/69 / EPEC)).